We begin with the raw amino-acid sequence, 339 residues long: tRNA-specific 2-thiouridylase MnmA (339 aa).

Residues 6–13 (AMSGGVDS) and Met-32 each bind ATP. Cys-92 (nucleophile) is an active-site residue. Cysteines 92 and 186 form a disulfide. An ATP-binding site is contributed by Gly-116. The interval 134–136 (KDQ) is interaction with tRNA. Catalysis depends on Cys-186, which acts as the Cysteine persulfide intermediate. The interaction with tRNA stretch occupies residues 288-289 (RY).

This sequence belongs to the MnmA/TRMU family.

It is found in the cytoplasm. It carries out the reaction S-sulfanyl-L-cysteinyl-[protein] + uridine(34) in tRNA + AH2 + ATP = 2-thiouridine(34) in tRNA + L-cysteinyl-[protein] + A + AMP + diphosphate + H(+). Catalyzes the 2-thiolation of uridine at the wobble position (U34) of tRNA, leading to the formation of s(2)U34. This chain is tRNA-specific 2-thiouridylase MnmA, found in Campylobacter curvus (strain 525.92).